The following is a 302-amino-acid chain: Thioredoxin-like protein CDSP32, chloroplastic (302 aa).

The N-terminal 56 residues, 1–56 (MATVANFLAKPISTVVPRPSSAVASTSSFVFFNHKTNPLFRRKNLPKRLFSAVKIK), are a transit peptide targeting the chloroplast. The 136-residue stretch at 163-298 (HEEEGIEPDQ…IGEILRYSGV (136 aa)) folds into the Thioredoxin domain. Active-site nucleophile residues include C219 and C222. The cysteines at positions 219 and 222 are disulfide-linked.

This sequence belongs to the thioredoxin family. Interacts with the plastidial peroxiredoxin BAS1.

Its subcellular location is the plastid. The protein resides in the chloroplast stroma. Its function is as follows. Probable thiol-disulfide oxidoreductase involved in resistance to oxidative stress. May participate in the reduction of alkyl hydroperoxides derived from oxidative stress by acting as a physiological electron donor to the BAS1 peroxiredoxin. May regenerate methionine sulfoxide reductase B1 (MSRB1) activity through sulfenic acid reduction. The polypeptide is Thioredoxin-like protein CDSP32, chloroplastic (CDSP32) (Arabidopsis thaliana (Mouse-ear cress)).